Consider the following 129-residue polypeptide: Cuticle protein 12.5 (129 aa).

10 consecutive repeat copies span residues 7–10, 15–18, 23–26, 28–31, 37–40, 67–70, 79–82, 91–94, 103–106, and 117–120.

Component of the cuticle of migratory locust which contains more than 100 different structural proteins. In Locusta migratoria (Migratory locust), this protein is Cuticle protein 12.5.